Here is a 798-residue protein sequence, read N- to C-terminus: Integrin beta-1 (798 aa).

The first 20 residues, 1–20 (MNLQLIFWIGLISSICCVFG), serve as a signal peptide directing secretion. Over 21–728 (QADENRCLKA…ETPECPTGPD (708 aa)) the chain is Extracellular. The 51-residue stretch at 26-76 (RCLKANAKSCGECIQAGPNCGWCVNSTFLQEGMPTSARCDDLEALKKKGCH) folds into the PSI domain. 28 cysteine pairs are disulfide-bonded: Cys27/Cys45, Cys35/Cys464, Cys38/Cys64, Cys48/Cys75, Cys207/Cys213, Cys261/Cys301, Cys401/Cys415, Cys435/Cys462, Cys466/Cys486, Cys477/Cys489, Cys491/Cys500, Cys502/Cys533, Cys516/Cys531, Cys525/Cys536, Cys538/Cys553, Cys555/Cys576, Cys560/Cys574, Cys568/Cys579, Cys581/Cys590, Cys592/Cys615, Cys599/Cys613, Cys607/Cys618, Cys620/Cys630, Cys633/Cys636, Cys640/Cys691, Cys646/Cys665, Cys649/Cys661, and Cys699/Cys723. Asn50 carries an N-linked (GlcNAc...) asparagine glycan. The span at 75–91 (CHPDDIENPRGSKDVKK) shows a compositional bias: basic and acidic residues. The disordered stretch occupies residues 75–107 (CHPDDIENPRGSKDVKKNKNVTNRSKGTAEKLQ). Asn94 and Asn97 each carry an N-linked (GlcNAc...) asparagine glycan. Positions 140-378 (DYPIDLYYLM…QLIIDAYNSL (239 aa)) constitute a VWFA domain. Residues Ser152 and Ser154 each contribute to the Mg(2+) site. Ca(2+) contacts are provided by Ser154, Asp157, Asp158, and Glu189. Residues 207–213 (CTSEQNC) form a CX3CL1-binding region. Asn212 carries an N-linked (GlcNAc...) asparagine glycan. 4 residues coordinate Ca(2+): Asn244, Asp246, Pro248, and Glu249. Glu249 provides a ligand contact to Mg(2+). The N-linked (GlcNAc...) asparagine glycan is linked to Asn269. Residues 295-314 (LPNDGQCHLENDVYTMSHYY) are CX3CL1-binding. Residue Ala362 coordinates Ca(2+). Asn363, Asn406, and Asn417 each carry an N-linked (GlcNAc...) asparagine glycan. The segment at 383–465 (ILENSKLPEG…IILQFICECE (83 aa)) is interaction with TMEM182. I-EGF domains follow at residues 466 to 501 (CQNE…RHCE), 502 to 554 (CSTD…KFCE), 555 to 591 (CDNF…SACD), and 592 to 631 (CSLD…PTCE). N-linked (GlcNAc...) asparagine glycosylation is present at Asn481. N-linked (GlcNAc...) asparagine glycosylation is present at Asn520. Asn584 carries an N-linked (GlcNAc...) asparagine glycan. Asn669 is a glycosylation site (N-linked (GlcNAc...) asparagine). A helical transmembrane segment spans residues 729-751 (IIPIVAGVVAGIVLIGLALLLIW). Residues 752–798 (KLLMIIHDTREFAKFEKEKMNAKWDTGENPIYKSAVTTVVNPKYEGK) lie on the Cytoplasmic side of the membrane. A signal for sorting from recycling endosomes; interaction with ACAP1 region spans residues 762 to 767 (EFAKFE). Thr777 is subject to Phosphothreonine. The residue at position 783 (Tyr783) is a Phosphotyrosine. A Phosphoserine modification is found at Ser785. Positions 785–792 (SAVTTVVN) are interaction with ITGB1BP1. Residue Thr789 is modified to Phosphothreonine. Lys794 carries the post-translational modification N6-acetyllysine; alternate. Residue Lys794 forms a Glycyl lysine isopeptide (Lys-Gly) (interchain with G-Cter in SUMO1); alternate linkage.

Belongs to the integrin beta chain family. In terms of assembly, interacts with seprase FAP (seprase); the interaction occurs at the cell surface of invadopodia membrane in a collagen-dependent manner. Heterodimer of an alpha and a beta subunit. Beta-1 associates with either alpha-1, alpha-2, alpha-3, alpha-4, alpha-5, alpha-6, alpha-7, alpha-8, alpha-9, alpha-10, alpha-11 or alpha-V. ITGA6:ITGB1 is found in a complex with CD9; interaction takes place in oocytes and is involved in sperm-egg fusion. Binds LGALS3BP and NMRK2, when associated with alpha-7, but not with alpha-5. Interacts with FLNA, FLNB, FLNC and RANBP9. Interacts with KRT1 in the presence of RACK1 and SRC. Interacts with JAML; integrin alpha-4/beta-1 may regulate leukocyte to endothelial cells adhesion by controlling JAML homodimerization. Interacts with RAB21. Interacts (via the cytoplasmic region) with RAB25 (via the hypervariable C-terminal region). Interacts with MYO10. Interacts with ITGB1BP1 (via C-terminal region); the interaction is a prerequisite for focal adhesion disassembly. Interacts with TLN1; the interaction is prevented by competitive binding of ITGB1BP1. Interacts with ACAP1; required for ITGB1 recycling. Interacts with ASAP3. Interacts with FERMT2; the interaction is inhibited in presence of ITGB1BP1. Interacts with DAB2. Interacts with FGR and HCK. Interacts with alpha-7A and alpha-7B in adult skeletal muscle. Interacts with alpha-7B in cardiomyocytes of adult heart. Interacts with EMP2; the interaction may be direct or indirect and ITGB1 has a heterodimer form. ITGA5:ITGB1 interacts with CCN3. ITGA4:ITGB1 is found in a ternary complex with CX3CR1 and CX3CL1. ITGA5:ITGB1 interacts with FBN1. ITGA5:ITGB1 acts as a receptor for fibronectin FN1 and mediates R-G-D-dependent cell adhesion to FN1. ITGA5:ITGB1 interacts with IL1B. Interacts with MDK. ITGA4:ITGB1 interacts with MDK; this interaction mediates MDK-induced osteoblast cells migration through PXN phosphorylation. ITGA6:ITGB1 interacts with MDK; this interaction mediates MDK-induced neurite-outgrowth. ITGA5:ITGB1 interacts with ACE2. Interacts with TMEM182 and LAMB1. Interacts with tensin TNS3; TNS3 also interacts with PEAK1, thus acting as an adapter molecule to bridge the association of PEAK1 with ITGB1. Interacts with tensin TNS4; the interaction displaces tensin TNS3 from the ITGB1 cytoplasmic tail and promotes ITGB1 stability. Integrin ITGA9:ITGB1 interacts with SPP1/OPN (via N-terminus). Integrin ITGA9:ITGB1 interacts with TNC/TNFN3 (via the 3rd Fibronectin type-III domain). Integrins ITGA4:ITGB1 and ITGA9:ITGB1 interact with SVEP1 (via Sushi domain 21); thereby inhibit Ca(2+) intracellular signaling and as a result repress vasocontraction. ITGA4:ITGB1 and ITGA5:ITGB1 interacts with SELP. Interacts with CD248. ITGA5:ITGB1 interacts with IGFBP1. ITGA4:ITGB1 interacts with BCAM. Interacts with ADGRG6.

It is found in the cell membrane. Its subcellular location is the cell projection. The protein resides in the invadopodium membrane. It localises to the ruffle membrane. The protein localises to the recycling endosome. It is found in the melanosome. Its subcellular location is the lamellipodium. The protein resides in the ruffle. It localises to the cell junction. The protein localises to the focal adhesion. In terms of biological role, integrins alpha-1/beta-1, alpha-2/beta-1, alpha-10/beta-1 and alpha-11/beta-1 are receptors for collagen. Integrins alpha-1/beta-1 and alpha-2/beta-2 recognize the proline-hydroxylated sequence G-F-P-G-E-R in collagen. Integrins alpha-2/beta-1, alpha-3/beta-1, alpha-4/beta-1, alpha-5/beta-1, alpha-8/beta-1, alpha-10/beta-1, alpha-11/beta-1 and alpha-V/beta-1 are receptors for fibronectin. Alpha-4/beta-1 recognizes one or more domains within the alternatively spliced CS-1 and CS-5 regions of fibronectin. Integrin alpha-5/beta-1 is a receptor for fibrinogen. Integrin alpha-1/beta-1, alpha-2/beta-1, alpha-6/beta-1 and alpha-7/beta-1 are receptors for lamimin. Integrin alpha-6/beta-1 (ITGA6:ITGB1) is present in oocytes and is involved in sperm-egg fusion. Integrin alpha-4/beta-1 is a receptor for VCAM1 and recognizes the sequence Q-I-D-S in VCAM1. Integrin alpha-9/beta-1 is a receptor for VCAM1, cytotactin and osteopontin. It recognizes the sequence A-E-I-D-G-I-E-L in cytotactin. Integrin alpha-3/beta-1 is a receptor for epiligrin, thrombospondin and CSPG4. Integrin alpha-3/beta-1 provides a docking site for FAP (seprase) at invadopodia plasma membranes in a collagen-dependent manner and hence may participate in the adhesion, formation of invadopodia and matrix degradation processes, promoting cell invasion. Alpha-3/beta-1 may mediate with LGALS3 the stimulation by CSPG4 of endothelial cells migration. Integrin alpha-V/beta-1 is a receptor for vitronectin. Beta-1 integrins recognize the sequence R-G-D in a wide array of ligands. When associated with alpha-7/beta-1 integrin, regulates cell adhesion and laminin matrix deposition. Involved in promoting endothelial cell motility and angiogenesis. Involved in osteoblast compaction through the fibronectin fibrillogenesis cell-mediated matrix assembly process and the formation of mineralized bone nodules. May be involved in up-regulation of the activity of kinases such as PKC via binding to KRT1. Together with KRT1 and RACK1, serves as a platform for SRC activation or inactivation. Plays a mechanistic adhesive role during telophase, required for the successful completion of cytokinesis. ITGA4:ITGB1 binds to fractalkine (CX3CL1) and may act as its coreceptor in CX3CR1-dependent fractalkine signaling. ITGA4:ITGB1 and ITGA5:ITGB1 bind to PLA2G2A via a site (site 2) which is distinct from the classical ligand-binding site (site 1) and this induces integrin conformational changes and enhanced ligand binding to site 1. ITGA5:ITGB1 acts as a receptor for fibrillin-1 (FBN1) and mediates R-G-D-dependent cell adhesion to FBN1. ITGA5:ITGB1 is a receptor for IL1B and binding is essential for IL1B signaling. ITGA5:ITGB3 is a receptor for soluble CD40LG and is required for CD40/CD40LG signaling. Plays an important role in myoblast differentiation and fusion during skeletal myogenesis. ITGA9:ITGB1 may play a crucial role in SVEP1/polydom-mediated myoblast cell adhesion. Integrins ITGA9:ITGB1 and ITGA4:ITGB1 repress PRKCA-mediated L-type voltage-gated channel Ca(2+) influx and ROCK-mediated calcium sensitivity in vascular smooth muscle cells via their interaction with SVEP1, thereby inhibit vasocontraction. In Felis catus (Cat), this protein is Integrin beta-1 (ITGB1).